Here is a 630-residue protein sequence, read N- to C-terminus: Polyphenol oxidase A, chloroplastic (630 aa).

Residues 1 to 25 (MASLCSNSSSTSLKTPFTSSTTCLS) are disordered. The N-terminal 87 residues, 1–87 (MASLCSNSSS…ANAIPLAASA (87 aa)), are a transit peptide targeting the chloroplast. Intrachain disulfides connect cysteine 98–cysteine 114 and cysteine 113–cysteine 181. Cu cation-binding residues include histidine 180, histidine 198, histidine 207, histidine 328, histidine 332, and histidine 370. The 2'-(S-cysteinyl)-histidine (Cys-His) cross-link spans 184–198 (CNGGYSIDGKVLQVH).

The protein belongs to the tyrosinase family. Requires Cu(2+) as cofactor.

It is found in the plastid. The protein localises to the chloroplast thylakoid lumen. It catalyses the reaction 2 catechol + O2 = 2 1,2-benzoquinone + 2 H2O. Catalyzes the oxidation of mono- and o-diphenols to o-diquinones. The polypeptide is Polyphenol oxidase A, chloroplastic (Solanum lycopersicum (Tomato)).